Consider the following 245-residue polypeptide: DNA repair protein RecO (245 aa).

The protein belongs to the RecO family.

Involved in DNA repair and RecF pathway recombination. In Klebsiella pneumoniae (strain 342), this protein is DNA repair protein RecO.